The sequence spans 305 residues: Glycerol-3-phosphate dehydrogenase [NAD(P)+] (305 aa).

Tryptophan 11, arginine 31, and lysine 79 together coordinate NADPH. Residues lysine 79 and glycine 107 each coordinate sn-glycerol 3-phosphate. Alanine 111 lines the NADPH pocket. Lysine 162, aspartate 215, serine 225, arginine 226, and asparagine 227 together coordinate sn-glycerol 3-phosphate. Lysine 162 functions as the Proton acceptor in the catalytic mechanism. Arginine 226 serves as a coordination point for NADPH. NADPH is bound at residue glutamate 252.

It belongs to the NAD-dependent glycerol-3-phosphate dehydrogenase family.

The protein localises to the cytoplasm. The enzyme catalyses sn-glycerol 3-phosphate + NAD(+) = dihydroxyacetone phosphate + NADH + H(+). It catalyses the reaction sn-glycerol 3-phosphate + NADP(+) = dihydroxyacetone phosphate + NADPH + H(+). It participates in membrane lipid metabolism; glycerophospholipid metabolism. Functionally, catalyzes the reduction of the glycolytic intermediate dihydroxyacetone phosphate (DHAP) to sn-glycerol 3-phosphate (G3P), the key precursor for phospholipid synthesis. The polypeptide is Glycerol-3-phosphate dehydrogenase [NAD(P)+] (Gloeobacter violaceus (strain ATCC 29082 / PCC 7421)).